The primary structure comprises 118 residues: Large ribosomal subunit protein bL19 (118 aa).

It belongs to the bacterial ribosomal protein bL19 family.

In terms of biological role, this protein is located at the 30S-50S ribosomal subunit interface and may play a role in the structure and function of the aminoacyl-tRNA binding site. The chain is Large ribosomal subunit protein bL19 from Coprothermobacter proteolyticus (strain ATCC 35245 / DSM 5265 / OCM 4 / BT).